The sequence spans 363 residues: 3,4-dihydroxy-2-butanone 4-phosphate synthase (363 aa).

Residues 1–202 (MSHISPIPEI…ITDLIEYRSR (202 aa)) are DHBP synthase. Residues 28–29 (RE), aspartate 33, 141–145 (RAGHT), and glutamate 165 contribute to the D-ribulose 5-phosphate site. A Mg(2+)-binding site is contributed by glutamate 29. Mg(2+) is bound at residue histidine 144. The segment at 205-363 (SLLEDMGNAP…EVVGFEEAEK (159 aa)) is GTP cyclohydrolase II-like.

This sequence in the N-terminal section; belongs to the DHBP synthase family. It in the C-terminal section; belongs to the GTP cyclohydrolase II family. It depends on Mg(2+) as a cofactor. The cofactor is Mn(2+).

The catalysed reaction is D-ribulose 5-phosphate = (2S)-2-hydroxy-3-oxobutyl phosphate + formate + H(+). The protein operates within cofactor biosynthesis; riboflavin biosynthesis; 2-hydroxy-3-oxobutyl phosphate from D-ribulose 5-phosphate: step 1/1. Functionally, catalyzes the conversion of D-ribulose 5-phosphate to formate and 3,4-dihydroxy-2-butanone 4-phosphate. The protein is 3,4-dihydroxy-2-butanone 4-phosphate synthase (ribB) of Neisseria meningitidis serogroup A / serotype 4A (strain DSM 15465 / Z2491).